The primary structure comprises 411 residues: Putative metal tolerance protein C3 (411 aa).

Residues 1-115 (MEVNYCPETP…DRAERAAQEL (115 aa)) lie on the Cytoplasmic side of the membrane. A helical membrane pass occupies residues 116–136 (AMQISNWANIFLLALKIYATV). Over 137–140 (KSGS) the chain is Vacuolar. Residues 141–161 (IAIAASTLDSLLDLMAGGILW) traverse the membrane as a helical segment. Topologically, residues 162-184 (FTHLSMKNVNIYKYPIGKLRVQP) are cytoplasmic. Residues 185 to 205 (VGIIIFAAVMATLGFQVLLVA) form a helical membrane-spanning segment. At 206 to 222 (AEQLISNEPSEKMNHVQ) the chain is on the vacuolar side. Residues 223-243 (LIWLYSIMLSATAIKLVLWIY) form a helical membrane-spanning segment. Residues 244 to 262 (CKSSRNHIVRAYAKDHHFD) are Cytoplasmic-facing. The helical transmembrane segment at 263 to 283 (VVTNVLGLVAAVLANAFYWWL) threads the bilayer. Residues 284 to 287 (DPTG) lie on the Vacuolar side of the membrane. Residues 288–308 (AILLAIYTIVNWSGTVMENAV) traverse the membrane as a helical segment. Residues 309-390 (SLIGQSAPPE…LPEVERAFVH (82 aa)) are Cytoplasmic-facing.

The protein belongs to the cation diffusion facilitator (CDF) transporter (TC 2.A.4) family.

It is found in the vacuole membrane. Functionally, involved in sequestration of excess metal in the cytoplasm into vacuoles to maintain metal homeostasis. The chain is Putative metal tolerance protein C3 (MTPC3) from Arabidopsis thaliana (Mouse-ear cress).